Reading from the N-terminus, the 628-residue chain is Biosynthetic arginine decarboxylase (628 aa).

At K101 the chain carries N6-(pyridoxal phosphate)lysine. Residue 281 to 291 (VDVGGGLGVDY) participates in substrate binding.

The protein belongs to the Orn/Lys/Arg decarboxylase class-II family. SpeA subfamily. Mg(2+) is required as a cofactor. It depends on pyridoxal 5'-phosphate as a cofactor.

The catalysed reaction is L-arginine + H(+) = agmatine + CO2. The protein operates within amine and polyamine biosynthesis; agmatine biosynthesis; agmatine from L-arginine: step 1/1. In terms of biological role, catalyzes the biosynthesis of agmatine from arginine. This is Biosynthetic arginine decarboxylase from Alkalilimnicola ehrlichii (strain ATCC BAA-1101 / DSM 17681 / MLHE-1).